A 369-amino-acid polypeptide reads, in one-letter code: Glutamate 5-kinase (369 aa).

ATP is bound at residue K9. Positions 49, 136, and 148 each coordinate substrate. Residues 168–169 (TD) and 210–216 (TGGMLTK) each bind ATP. Residues 275-355 (QGEIYVDQGA…KGVVIHRDDW (81 aa)) enclose the PUA domain.

It belongs to the glutamate 5-kinase family.

The protein resides in the cytoplasm. The catalysed reaction is L-glutamate + ATP = L-glutamyl 5-phosphate + ADP. Its pathway is amino-acid biosynthesis; L-proline biosynthesis; L-glutamate 5-semialdehyde from L-glutamate: step 1/2. In terms of biological role, catalyzes the transfer of a phosphate group to glutamate to form L-glutamate 5-phosphate. This chain is Glutamate 5-kinase, found in Streptococcus gordonii (strain Challis / ATCC 35105 / BCRC 15272 / CH1 / DL1 / V288).